The chain runs to 276 residues: MDSACKPTQRRLDAAGFWQIWQRFDADEKGYIEEKELDAFFHHVLTKLGTDDAVMEENVWKMKQQFMAAHDVSKDGHIQMKELACLFLSEDENFLLLFRQETPLDSSVEFMQIWRKYDADSSGFISAAELCNFLRDLFLHHKKAISEAKLEEYTGTMMKIFDKNKDGRLDLNDLARILALQENFLLQFKMDACSTEERKRDFEKIFAHYDVSKTGALEGPEVDGFVKDMMELVQPSISGVDLDKFREILLRHCDVNKDGKIQKSELALCLGLKINP.

6 EF-hand domains span residues 12–47 (LDAA…VLTK), 58–93 (NVWK…EDEN), 105–140 (DSSV…LFLH), 149–184 (KLEE…QENF), 197–232 (ERKR…MMEL), and 240–276 (VDLD…KINP). 23 residues coordinate Ca(2+): aspartate 71, serine 73, aspartate 75, histidine 77, glutamate 82, aspartate 118, aspartate 120, serine 122, glutamate 129, aspartate 162, asparagine 164, aspartate 166, arginine 168, aspartate 173, aspartate 210, serine 212, threonine 214, glutamate 221, aspartate 254, asparagine 256, aspartate 258, lysine 260, and glutamate 265.

The protein resides in the cytoplasm. Its subcellular location is the secreted. The protein localises to the cytoplasmic vesicle. It localises to the secretory vesicle membrane. This chain is Secretagogin (SCGN), found in Sus scrofa (Pig).